The sequence spans 66 residues: Large ribosomal subunit protein uL29 (66 aa).

The protein belongs to the universal ribosomal protein uL29 family.

The sequence is that of Large ribosomal subunit protein uL29 from Borreliella burgdorferi (strain ZS7) (Borrelia burgdorferi).